The following is a 358-amino-acid chain: NADH-quinone oxidoreductase subunit H (358 aa).

8 helical membrane-spanning segments follow: residues 20 to 40 (ITVG…IPLI), 95 to 115 (ALFY…WAVI), 128 to 148 (IGLL…IIAG), 168 to 188 (ISYE…SGSM), 206 to 226 (VFSW…ISAV), 253 to 273 (GFAF…ISAL), 290 to 310 (WGFI…AVLY), and 334 to 354 (VLIP…ISPL).

It belongs to the complex I subunit 1 family. As to quaternary structure, NDH-1 is composed of 14 different subunits. Subunits NuoA, H, J, K, L, M, N constitute the membrane sector of the complex.

It is found in the cell inner membrane. It carries out the reaction a quinone + NADH + 5 H(+)(in) = a quinol + NAD(+) + 4 H(+)(out). NDH-1 shuttles electrons from NADH, via FMN and iron-sulfur (Fe-S) centers, to quinones in the respiratory chain. The immediate electron acceptor for the enzyme in this species is believed to be ubiquinone. Couples the redox reaction to proton translocation (for every two electrons transferred, four hydrogen ions are translocated across the cytoplasmic membrane), and thus conserves the redox energy in a proton gradient. This subunit may bind ubiquinone. The sequence is that of NADH-quinone oxidoreductase subunit H from Neisseria meningitidis serogroup A / serotype 4A (strain DSM 15465 / Z2491).